Reading from the N-terminus, the 352-residue chain is Selenide, water dikinase (352 aa).

The active site involves Cys23. Residues Lys26 and 54–56 contribute to the ATP site; that span reads SRD. Asp57 lines the Mg(2+) pocket. Residues Asp74, Asp97, and 145 to 147 each bind ATP; that span reads GHS. Asp97 contributes to the Mg(2+) binding site. Asp233 is a Mg(2+) binding site.

The protein belongs to the selenophosphate synthase 1 family. Class I subfamily. In terms of assembly, homodimer. Mg(2+) serves as cofactor.

It catalyses the reaction hydrogenselenide + ATP + H2O = selenophosphate + AMP + phosphate + 2 H(+). In terms of biological role, synthesizes selenophosphate from selenide and ATP. This is Selenide, water dikinase from Shewanella sp. (strain MR-7).